The primary structure comprises 430 residues: Glutamate-1-semialdehyde 2,1-aminomutase (430 aa).

K265 carries the post-translational modification N6-(pyridoxal phosphate)lysine.

Belongs to the class-III pyridoxal-phosphate-dependent aminotransferase family. HemL subfamily. As to quaternary structure, homodimer. Pyridoxal 5'-phosphate is required as a cofactor.

The protein localises to the cytoplasm. The enzyme catalyses (S)-4-amino-5-oxopentanoate = 5-aminolevulinate. It participates in porphyrin-containing compound metabolism; protoporphyrin-IX biosynthesis; 5-aminolevulinate from L-glutamyl-tRNA(Glu): step 2/2. The polypeptide is Glutamate-1-semialdehyde 2,1-aminomutase (Shewanella sp. (strain ANA-3)).